We begin with the raw amino-acid sequence, 214 residues long: MTVLLPQLNHIHKLPVVLNRRLRQSYRLPVISAVSGKELILSGKVRAVEPKEANAVVASEGYILLDVRPAWEREKARVKGSLHVPLFVEDPDNGPITLLKKWIHLGYIGLWTGQRFTMINDEFALRVVEAVPDKESKVLVVCGEGLRSLAAVSKLHGEGYKSLGWLTGGFNRVSEGDFPEIEGTEELRFATIGGVSFYLLKLLVLLPSFGQKSR.

The region spanning 58–182 is the Rhodanese domain; the sequence is ASEGYILLDV…VSEGDFPEIE (125 aa). The Cysteine persulfide intermediate role is filled by Cys-142. The chain crosses the membrane as a helical span at residues 190–206; the sequence is ATIGGVSFYLLKLLVLL.

It localises to the membrane. The polypeptide is Rhodanese-like domain-containing protein 10 (STR10) (Arabidopsis thaliana (Mouse-ear cress)).